Consider the following 173-residue polypeptide: Photosystem I assembly protein Ycf3 (173 aa).

TPR repeat units lie at residues 36–69, 73–106, and 121–154; these read AFAY…EQDD, SYIL…NPRL, and GEQS…APNN.

It belongs to the Ycf3 family.

Its subcellular location is the cellular thylakoid membrane. Essential for the assembly of the photosystem I (PSI) complex. May act as a chaperone-like factor to guide the assembly of the PSI subunits. The sequence is that of Photosystem I assembly protein Ycf3 from Synechococcus sp. (strain JA-3-3Ab) (Cyanobacteria bacterium Yellowstone A-Prime).